A 352-amino-acid polypeptide reads, in one-letter code: MTLEQKLDRIVLRAEELRAMLAAGVDGERFVAASRELAEIEPVEQQILLLRAAERARDEAEAARADPELRELADAELDSLRETLPRLEHEIRLALLPRDAADERPAILEIRPAAGGDEAALFAAELFAAYRRYADLRGWRFEILDYTETELGGLREGIAEITGRAVFARLKFESGVHRVQRVPATETQGRIHTSTVTVAVLPEAEDVDVEVNEADLRIDVFRASGAGGQHVNKTESAVRITHLPTGIVVAMQEERSQHKNRAKAMKILRARLYEQTRAAAAAGRAADRKSQVGTGDRSERIRTYNFPQGRVTDHRINLTLHKIDRVMLGEFDEIIDALTEEDQAARLAAAGA.

At Q229 the chain carries N5-methylglutamine.

Belongs to the prokaryotic/mitochondrial release factor family. In terms of processing, methylated by PrmC. Methylation increases the termination efficiency of RF1.

It localises to the cytoplasm. Functionally, peptide chain release factor 1 directs the termination of translation in response to the peptide chain termination codons UAG and UAA. The sequence is that of Peptide chain release factor 1 from Acidiphilium cryptum (strain JF-5).